The following is a 354-amino-acid chain: Uroporphyrinogen decarboxylase (354 aa).

Residues 27–31 (RQAGR), aspartate 77, tyrosine 154, serine 209, and histidine 327 contribute to the substrate site.

This sequence belongs to the uroporphyrinogen decarboxylase family. In terms of assembly, homodimer.

The protein localises to the cytoplasm. It catalyses the reaction uroporphyrinogen III + 4 H(+) = coproporphyrinogen III + 4 CO2. The protein operates within porphyrin-containing compound metabolism; protoporphyrin-IX biosynthesis; coproporphyrinogen-III from 5-aminolevulinate: step 4/4. Functionally, catalyzes the decarboxylation of four acetate groups of uroporphyrinogen-III to yield coproporphyrinogen-III. In Pseudoalteromonas translucida (strain TAC 125), this protein is Uroporphyrinogen decarboxylase.